Consider the following 558-residue polypeptide: Nuclear speckle splicing regulatory protein 1 (558 aa).

Residues 21 to 54 form a disordered region; that stretch reads PVLQKPSVFGNDSDDDDETSVSESLQREAAKKQA. Serine 27 and serine 33 each carry phosphoserine. A coiled-coil region spans residues 104 to 170; it reads IHNLLKAVEI…REKRAAALEA (67 aa). A necessary for alternative splicing activity region spans residues 106-170; it reads NLLKAVEIRK…REKRAAALEA (65 aa). Residues lysine 199 and lysine 210 each participate in a glycyl lysine isopeptide (Lys-Gly) (interchain with G-Cter in SUMO2) cross-link. Residues 204-215 are compositionally biased toward basic and acidic residues; sequence EARSGIKEEKSR. Positions 204-534 are disordered; the sequence is EARSGIKEEK…KRNNEETVMS (331 aa). Residues 216-226 show a composition bias toward polar residues; it reads GFSNEVSSKNR. 3 positions are modified to phosphoserine: serine 248, serine 254, and serine 255. Basic and acidic residues predominate over residues 250-280; sequence FDAKSSADDEIEETRVNCRREKVIETPENDF. Threonine 275 carries the post-translational modification Phosphothreonine. Residue lysine 281 forms a Glycyl lysine isopeptide (Lys-Gly) (interchain with G-Cter in SUMO2) linkage. The span at 299 to 310 shows a compositional bias: basic residues; that stretch reads STRHHTKGSRTS. 3 stretches are compositionally biased toward basic and acidic residues: residues 311-442, 449-487, and 501-517; these read RGHE…KREV, RNQD…RNQE, and RLTE…ERPP. A coiled-coil region spans residues 379 to 427; that stretch reads KREKDREKYSQREQERDRQQNDQNRPSEKGEKEEKSKAKEEHMKVRKER. Serine 457 carries the phosphoserine modification.

It belongs to the NSRP1 family. As to quaternary structure, interacts (via C-terminus) with SRSF1. Interacts (via C-terminus) with SRSF2. Expressed in dendritic cells, T-cells, B-cells and natural killer cells. Expressed in secondary lymphoid organs such as spleen and mesenteric, axillary and brachial lymph nodes.

The protein resides in the nucleus. It is found in the nucleus speckle. In terms of biological role, RNA-binding protein that mediates pre-mRNA alternative splicing regulation. This chain is Nuclear speckle splicing regulatory protein 1 (NSRP1), found in Homo sapiens (Human).